The sequence spans 147 residues: Large ribosomal subunit protein uL15 (147 aa).

Positions Met1 to Gly28 are enriched in basic residues. The tract at residues Met1–Asn43 is disordered. Residues Gly29–Gly38 show a composition bias toward gly residues.

The protein belongs to the universal ribosomal protein uL15 family. Part of the 50S ribosomal subunit.

Binds to the 23S rRNA. In Pyrococcus abyssi (strain GE5 / Orsay), this protein is Large ribosomal subunit protein uL15.